We begin with the raw amino-acid sequence, 53 residues long: UPF0391 membrane protein ETA_06630 (53 aa).

Transmembrane regions (helical) follow at residues 4–24 (WGII…GGLA) and 27–47 (AAWA…ISLF).

Belongs to the UPF0391 family.

The protein localises to the cell membrane. This is UPF0391 membrane protein ETA_06630 from Erwinia tasmaniensis (strain DSM 17950 / CFBP 7177 / CIP 109463 / NCPPB 4357 / Et1/99).